The following is a 314-amino-acid chain: MAAPLFDCLIVGGGPAGLAAALGLCRAIRTAVVFDSKSYRNPTEHMHNVSTWDHANPHDYRLAARKELTEGRYNTVTLADVALRKIWKLDSGEFEATDAVGKVWKGRKLILATGVKDEIPELPGYADCWPKSIYHCLFCHGFEERGAPSVGVLAIGPVANPKPAEHLSRLAHNLAKTVTIYTNGNEELAAQLRPSIEKDQWLTLDNRVIKQLHKTDGIPVRVELDDGTTKEEGFLVHAMKTTPRLDFEHNLNLELSAQGTEFVASPPFSETTTPGCFATGDCGMAIKAASMSMSNGSLAAVGVVSQLAFDEKAK.

FAD contacts are provided by residues 13-16 (GGPA), 35-40 (DSKSYR), H47, and A112. Residues C136 and C139 are joined by a disulfide bond. FAD contacts are provided by residues D281 and 288 to 289 (AA).

This sequence belongs to the class-II pyridine nucleotide-disulfide oxidoreductase family. Homodimer. FAD is required as a cofactor.

It functions in the pathway mycotoxin biosynthesis. Thioredoxin reductase; part of the gene cluster that mediates the biosynthesis of aspirochlorine (or antibiotic A30641), an unusual halogenated spiro compound with distinctive antifungal properties due to selective inhibition of protein biosynthesis, and which is also active against bacteria, viruses, and murine tumor cells. The non-ribosomal peptide synthetase (NRPS) aclP is responsible the formation of the diketopiperazine (DKP) core from the condensation of 2 phenylalanine residues. One Phe residue is tailored into chlorotyrosine by hydroxylation and chlorination, whereas the second Phe undergoes an unprecedented C-C bond cleavage to be converted into glycine. After formation of the DKP, sulfur is incorporated into the DKP by conjugation with glutathione by aclG, followed by its stepwise degradation to the thiol by aclI, aclJ and aclK, and the dithiol oxidation by aclT. In addition, oxygenases (aclB, aclC, aclL and aclO) and O-methyltransferases (aclM and aclU) act as tailoring enzymes to produce the intermediate dechloroaspirochlorine. Ultimately, chlorination of dechloroaspirochlorine by the halogenase aclH is the last step in the aspirochlorine pathway. This is Thioredoxin reductase aclD from Aspergillus oryzae (strain ATCC 42149 / RIB 40) (Yellow koji mold).